The primary structure comprises 149 residues: Oligosaccharyltransferase complex subunit OSTC (149 aa).

The Cytoplasmic segment spans residues 1-32 (METLYRVPFLVLECPNLKLKKPPWVHMPSAMT). Residues 33 to 53 (VYALVVVSYFLITGGIIYDVI) traverse the membrane as a helical segment. Over 54–83 (VEPPSVGSMTDEHGHQRPVAFLAYRVNGQY) the chain is Extracellular. A helical transmembrane segment spans residues 84-104 (IMEGLASSFLFTMGGLGFIIL). The Cytoplasmic segment spans residues 105-117 (DRSNAPNIPKLNR). A helical transmembrane segment spans residues 118–138 (FLLLFIGFVCVLLSFFMARVF). Over 139 to 149 (MRMKLPGYLMG) the chain is Extracellular.

Belongs to the OSTC family. As to quaternary structure, component of STT3A-containing oligosaccharyl transferase (OST-A) complex. STT3A-containing complex assembly occurs through the formation of 3 subcomplexes. Subcomplex 1 contains RPN1 and TMEM258, subcomplex 2 contains the STT3A-specific subunits STT3A, DC2/OSTC, and KCP2 as well as the core subunit OST4, and subcomplex 3 contains RPN2, DAD1, and OST48. The OST-A complex can form stable complexes with the Sec61 complex or with both the Sec61 and TRAP complexes. Interacts with PSEN1 and NCSTN; indicative for an association with the gamma-secretase complex.

The protein localises to the endoplasmic reticulum. It is found in the membrane. It functions in the pathway protein modification; protein glycosylation. Functionally, subunit of STT3A-containing oligosaccharyl transferase (OST-A) complex that catalyzes the initial transfer of a defined glycan (Glc(3)Man(9)GlcNAc(2) in eukaryotes) from the lipid carrier dolichol-pyrophosphate to an asparagine residue within an Asn-X-Ser/Thr consensus motif in nascent polypeptide chains, the first step in protein N-glycosylation. N-glycosylation occurs cotranslationally and the complex associates with the Sec61 complex at the channel-forming translocon complex that mediates protein translocation across the endoplasmic reticulum (ER). Within the OST-A complex, acts as an adapter that anchors the OST-A complex to the Sec61 complex. May be involved in N-glycosylation of APP (amyloid-beta precursor protein). Can modulate gamma-secretase cleavage of APP by enhancing endoprotelysis of PSEN1. The chain is Oligosaccharyltransferase complex subunit OSTC from Canis lupus familiaris (Dog).